The chain runs to 317 residues: Porphobilinogen deaminase (317 aa).

At Cys245 the chain carries S-(dipyrrolylmethanemethyl)cysteine.

It belongs to the HMBS family. Monomer. It depends on dipyrromethane as a cofactor.

It carries out the reaction 4 porphobilinogen + H2O = hydroxymethylbilane + 4 NH4(+). It participates in porphyrin-containing compound metabolism; protoporphyrin-IX biosynthesis; coproporphyrinogen-III from 5-aminolevulinate: step 2/4. The protein operates within porphyrin-containing compound metabolism; chlorophyll biosynthesis. Its function is as follows. Tetrapolymerization of the monopyrrole PBG into the hydroxymethylbilane pre-uroporphyrinogen in several discrete steps. In Prochlorococcus marinus (strain MIT 9303), this protein is Porphobilinogen deaminase.